A 471-amino-acid chain; its full sequence is UDP-N-acetylmuramoylalanine--D-glutamate ligase (471 aa).

120 to 126 (GSNGKTT) contributes to the ATP binding site.

The protein belongs to the MurCDEF family.

The protein resides in the cytoplasm. It catalyses the reaction UDP-N-acetyl-alpha-D-muramoyl-L-alanine + D-glutamate + ATP = UDP-N-acetyl-alpha-D-muramoyl-L-alanyl-D-glutamate + ADP + phosphate + H(+). It functions in the pathway cell wall biogenesis; peptidoglycan biosynthesis. Cell wall formation. Catalyzes the addition of glutamate to the nucleotide precursor UDP-N-acetylmuramoyl-L-alanine (UMA). This Nitrosomonas europaea (strain ATCC 19718 / CIP 103999 / KCTC 2705 / NBRC 14298) protein is UDP-N-acetylmuramoylalanine--D-glutamate ligase.